Consider the following 248-residue polypeptide: Prepilin leader peptidase/N-methyltransferase (248 aa).

A helical transmembrane segment spans residues 1-21; it reads MLSILFIFGLILGSFYYTAGC. Positions 36, 39, 61, and 64 each coordinate Zn(2+). 6 helical membrane passes run 68 to 88, 90 to 110, 114 to 134, 143 to 163, 178 to 198, and 223 to 243; these read ISFM…AAGI, FGIS…IIVA, IHFM…LAAA, WYAG…IAAI, VIGF…SVLI, and AIAA…SFYI.

Belongs to the peptidase A24 family. Zn(2+) is required as a cofactor.

The protein localises to the cell membrane. The catalysed reaction is Typically cleaves a -Gly-|-Phe- bond to release an N-terminal, basic peptide of 5-8 residues from type IV prepilin, and then N-methylates the new N-terminal amino group, the methyl donor being S-adenosyl-L-methionine.. Plays a role in type II pseudopili formation by proteolytically removing the leader sequence from substrate proteins and subsequently monomethylating the alpha-amino group of the newly exposed N-terminal phenylalanine. Substrates include proteins required for biogenesis of the type II general secretory apparatus. This chain is Prepilin leader peptidase/N-methyltransferase (comC), found in Bacillus subtilis (strain 168).